Consider the following 1433-residue polypeptide: MRKKTKNRLISSVLSTVVISSLLFPGAAGASSKVTSPSVKKELQSAESIQNKISSSLKKSFKKKEKTTFLIKFKDLANPEKAAKAAVKKAKSKKLSAAKTEYQKRSAVVSSLKVTADESQQDVLKYLNTQKDKGNADQIHSYYVVNGIAVHASKEVMEKVVQFPEVEKVLPNEKRQLFKSSSPFNMKKAQKAIKATDGVEWNVDQIDAPKAWALGYDGTGTVVASIDTGVEWNHPALKEKYRGYNPENPNEPENEMNWYDAVAGEASPYDDLAHGTHVTGTMVGSEPDGTNQIGVAPGAKWIAVKAFSEDGGTDADILEAGEWVLAPKDAEGNPHPEMAPDVVNNSWGGGSGLDEWYRDMVNAWRAADIFPEFSAGNTDLFIPGGPGSIANPANYPESFATGATDINKKLADFSLQGPSPYDEIKPEISAPGVNIRSSVPGQTYEDGWDGTSMAGPHVSAVAALLKQANASLSVDEMEDILTSTAEPLTDSTFPDSPNNGYGHGLVNAFDAVSAVTDGLGKAEGQVSVEGDDQEPPVYQHEKVTEAYEGGSLPLTLTAEDNVSVTSVKLSYKLDQGEWTEITAKRISGDHLKGTYQAEIPDIKGTKLSYKWMIHDFGGHVVSSDVYDVTVKPSITAGYKQDFETAPGGWVASGTNNNWEWGVPSTGPNTAASGEKVYGTNLTGNYANSANMNLVMPPIKAPDSGSLFLQFKSWHNLEDDFDYGYVFVLPEGEKNWEQAGVYNGKTSSWTDEEIDLSAYKGQNIQVMFNLQSDESIAKEGWYIDDVVLSDKSAGKTVKKNKLGVEKPSGKQKKKPVNPKKAKPSANTAVKHQNKAIQPQVLPLKAQVSVVETGKSTYSDQSTGQYTLKHKAGDYTLMAEAYGYQSKTQKVSLKTDQTTQANFTLEEMKKGTLKGTVINKTTGEPVTGASVYVVEDAAVEPAMTNDKGEYMLEAYEGAYTIKVAAPGYYSDEFSVELKGDVTKETALKPFVGYPGEIAYDDGTAENANSYFAAGNGWAVKMTLADGKDKGMLTGGLFRFWDTEFPDPGGTEFKVEVYDATGKDGAPGKKIAGPFNAEALRNGEWTKVDLSSKGIMVDKDFYLVYIQSKPDPYSPGLAMDETGQNSGRNWQYIDGKWQPGDKADGNYMIRALVDYEAAVPEITSPTDKSYTNKDSVTVKGNASPGTTVHIYNGEKEAGETKAAADGTFHAGIILNKGENELTATASTDNGTTDASSPITVTLDQEKPELTLDNPKDGGKTNKETLTVKGAVSDDNLKDVKVNGKKATVADGSYSARILLENGRNEIKVIATDLAGNKTTKKTVIDVNFDKPVISGLIPGEDKNLKAGESVKIAFSSAEDLDATFTIRMPLTNARASVQNATELPLREISPGRYEGYWTATSSIKAKGAKVEVIVRDDYGNETRKTANGKLNMNTEN.

A signal peptide spans 1 to 30; it reads MRKKTKNRLISSVLSTVVISSLLFPGAAGA. The propeptide occupies 31-194; it reads SSKVTSPSVK…NMKKAQKAIK (164 aa). The Inhibitor I9 domain occupies 68 to 177; the sequence is TFLIKFKDLA…KVLPNEKRQL (110 aa). A Peptidase S8 domain is found at 200-512; sequence EWNVDQIDAP…HGLVNAFDAV (313 aa). Catalysis depends on charge relay system residues aspartate 227, histidine 274, and serine 452. The propeptide occupies 756–1433; that stretch reads SAYKGQNIQV…NGKLNMNTEN (678 aa). Residues 800-830 are disordered; that stretch reads KLGVEKPSGKQKKKPVNPKKAKPSANTAVKH. The span at 808–821 shows a compositional bias: basic residues; that stretch reads GKQKKKPVNPKKAK.

The protein belongs to the peptidase S8 family.

The protein localises to the secreted. The polypeptide is Bacillopeptidase F (bpr) (Bacillus subtilis (strain 168)).